Reading from the N-terminus, the 23-residue chain is Phallacidin proprotein (23 aa).

A propeptide is located at residue Pro-1. The segment at residues 2–8 (AWLVDCP) is a cross-link (cyclopeptide (Ala-Pro)). The segment at residues 3-7 (WLVDC) is a cross-link (2'-cysteinyl-6'-hydroxytryptophan sulfoxide (Trp-Cys)). A propeptide spanning residues 9-23 (CVGDDISRLLTRGEK) is cleaved from the precursor.

The protein belongs to the MSDIN fungal toxin family. Processed by the macrocyclase-peptidase enzyme POPB to yield a toxic cyclic heptapeptide. POPB first removes 10 residues from the N-terminus. Conformational trapping of the remaining peptide forces the enzyme to release this intermediate rather than proceed to macrocyclization. The enzyme rebinds the remaining peptide in a different conformation and catalyzes macrocyclization of the N-terminal 7 residues.

Functionally, major toxin that belongs to the bicyclic heptapeptides called phallotoxins. Although structurally related to amatoxins, phallotoxins have a different mode of action, which is the stabilization of F-actin. Phallotoxins are poisonous when administered parenterally, but not orally because of poor absorption. The polypeptide is Phallacidin proprotein (Amanita rimosa).